Reading from the N-terminus, the 278-residue chain is Probable endonuclease 4 (278 aa).

Zn(2+)-binding residues include His70, His108, Glu143, Asp176, His179, His210, Asp223, His225, and Glu255.

The protein belongs to the AP endonuclease 2 family. Requires Zn(2+) as cofactor.

The catalysed reaction is Endonucleolytic cleavage to 5'-phosphooligonucleotide end-products.. Functionally, endonuclease IV plays a role in DNA repair. It cleaves phosphodiester bonds at apurinic or apyrimidinic (AP) sites, generating a 3'-hydroxyl group and a 5'-terminal sugar phosphate. The sequence is that of Probable endonuclease 4 from Mycoplasmopsis agalactiae (strain NCTC 10123 / CIP 59.7 / PG2) (Mycoplasma agalactiae).